A 107-amino-acid polypeptide reads, in one-letter code: Sperm-specific class P protein 31 (107 aa).

In terms of domain architecture, MSP spans 1 to 107 (MINIDPPSGD…GEVVVKMVAS (107 aa)).

Expressed at higher level in testis.

This chain is Sperm-specific class P protein 31 (ssp-31), found in Caenorhabditis elegans.